Here is a 63-residue protein sequence, read N- to C-terminus: Small ribosomal subunit protein bS21 (63 aa).

The protein belongs to the bacterial ribosomal protein bS21 family.

The sequence is that of Small ribosomal subunit protein bS21 from Porphyromonas gingivalis (strain ATCC 33277 / DSM 20709 / CIP 103683 / JCM 12257 / NCTC 11834 / 2561).